The following is a 475-amino-acid chain: tRNA (guanine(37)-N(1))-methyltransferase (475 aa).

Residues histidine 219, 258–259 (DL), and 286–287 (DG) each bind S-adenosyl-L-methionine. The disordered stretch occupies residues 306–328 (KITKQKPTSNDKKRNRKVESPTV). Asparagine 349 provides a ligand contact to S-adenosyl-L-methionine. Residues 456–469 (NLVSQSDVSKSSDN) show a composition bias toward polar residues. The segment at 456 to 475 (NLVSQSDVSKSSDNILEKDT) is disordered.

The protein belongs to the class I-like SAM-binding methyltransferase superfamily. TRM5/TYW2 family. In terms of assembly, monomer.

Its subcellular location is the mitochondrion matrix. The protein resides in the nucleus. The protein localises to the cytoplasm. It catalyses the reaction guanosine(37) in tRNA + S-adenosyl-L-methionine = N(1)-methylguanosine(37) in tRNA + S-adenosyl-L-homocysteine + H(+). Specifically methylates the N1 position of guanosine-37 in various cytoplasmic and mitochondrial tRNAs. Methylation is not dependent on the nature of the nucleoside 5' of the target nucleoside. This is the first step in the biosynthesis of wybutosine (yW), a modified base adjacent to the anticodon of tRNAs and required for accurate decoding. The polypeptide is tRNA (guanine(37)-N(1))-methyltransferase (Batrachochytrium dendrobatidis (strain JAM81 / FGSC 10211) (Frog chytrid fungus)).